A 463-amino-acid chain; its full sequence is tRNA modification GTPase MnmE (463 aa).

Residues Arg-29, Glu-91, and Arg-130 each coordinate (6S)-5-formyl-5,6,7,8-tetrahydrofolate. One can recognise a TrmE-type G domain in the interval 225–384 (GLKVAIVGRP…LETAILEIVQ (160 aa)). Asn-235 serves as a coordination point for K(+). GTP contacts are provided by residues 235–240 (NVGKSS), 254–260 (TDLPGTT), and 279–282 (DTAG). Residue Ser-239 participates in Mg(2+) binding. Residues Thr-254, Leu-256, and Thr-259 each contribute to the K(+) site. Thr-260 provides a ligand contact to Mg(2+). A (6S)-5-formyl-5,6,7,8-tetrahydrofolate-binding site is contributed by Lys-463.

It belongs to the TRAFAC class TrmE-Era-EngA-EngB-Septin-like GTPase superfamily. TrmE GTPase family. Homodimer. Heterotetramer of two MnmE and two MnmG subunits. Requires K(+) as cofactor.

The protein localises to the cytoplasm. Functionally, exhibits a very high intrinsic GTPase hydrolysis rate. Involved in the addition of a carboxymethylaminomethyl (cmnm) group at the wobble position (U34) of certain tRNAs, forming tRNA-cmnm(5)s(2)U34. In Trichormus variabilis (strain ATCC 29413 / PCC 7937) (Anabaena variabilis), this protein is tRNA modification GTPase MnmE.